The sequence spans 281 residues: NADPH-dependent 7-cyano-7-deazaguanine reductase (281 aa).

86-88 (IES) is a substrate binding site. 88-89 (SK) contacts NADPH. Cysteine 189 serves as the catalytic Thioimide intermediate. The active-site Proton donor is aspartate 196. 228–229 (HE) contacts substrate. 257–258 (RG) contributes to the NADPH binding site.

It belongs to the GTP cyclohydrolase I family. QueF type 2 subfamily. Homodimer.

The protein resides in the cytoplasm. It carries out the reaction 7-aminomethyl-7-carbaguanine + 2 NADP(+) = 7-cyano-7-deazaguanine + 2 NADPH + 3 H(+). Its pathway is tRNA modification; tRNA-queuosine biosynthesis. Functionally, catalyzes the NADPH-dependent reduction of 7-cyano-7-deazaguanine (preQ0) to 7-aminomethyl-7-deazaguanine (preQ1). The protein is NADPH-dependent 7-cyano-7-deazaguanine reductase of Mannheimia succiniciproducens (strain KCTC 0769BP / MBEL55E).